The following is a 255-amino-acid chain: Putative ankyrin repeat protein R880 (255 aa).

ANK repeat units follow at residues 79 to 109 (SGINNYLLTACKYGHCKLVKYFVECGADIHY), 110 to 139 (KTDYALQLACKYGYLEIVKYLVKKGANINT), 141 to 169 (DCYAVQLASREGHLKIVKYLVELGTNVRK), 171 to 199 (RDLAFRWSVENNHLSVTKYLVELGSDVRS), and 201 to 229 (KNYAIKKSCEYGYFEMTQYLMNQGANFRV).

This is Putative ankyrin repeat protein R880 from Acanthamoeba polyphaga (Amoeba).